Reading from the N-terminus, the 146-residue chain is Large ribosomal subunit protein uL15 (146 aa).

Positions 1 to 13 are enriched in basic and acidic residues; the sequence is MKLNELHPSEGSR. Residues 1–56 are disordered; the sequence is MKLNELHPSEGSRHARKRVGRGTSSGFGKTSGRGQKGQHARSGGNTRLGFEGGQMP. Over residues 23-35 the composition is skewed to gly residues; sequence TSSGFGKTSGRGQ.

The protein belongs to the universal ribosomal protein uL15 family. In terms of assembly, part of the 50S ribosomal subunit.

In terms of biological role, binds to the 23S rRNA. The protein is Large ribosomal subunit protein uL15 of Lactobacillus delbrueckii subsp. bulgaricus (strain ATCC 11842 / DSM 20081 / BCRC 10696 / JCM 1002 / NBRC 13953 / NCIMB 11778 / NCTC 12712 / WDCM 00102 / Lb 14).